A 181-amino-acid polypeptide reads, in one-letter code: Regulator of G-protein signaling 5 (181 aa).

The RGS domain occupies Ser-64–Ile-180.

The protein localises to the cytoplasm. The protein resides in the membrane. Inhibits signal transduction by increasing the GTPase activity of G protein alpha subunits thereby driving them into their inactive GDP-bound form. Binds to G(i)-alpha and G(o)-alpha, but not to G(s)-alpha. In Bos taurus (Bovine), this protein is Regulator of G-protein signaling 5 (RGS5).